We begin with the raw amino-acid sequence, 831 residues long: Cation/H(+) symporter 13 (831 aa).

The next 12 membrane-spanning stretches (helical) occupy residues tyrosine 50–phenylalanine 70, valine 89–alanine 109, lysine 112–leucine 132, isoleucine 147–phenylalanine 167, leucine 214–asparagine 234, methionine 250–threonine 270, valine 282–methionine 302, glycine 303–leucine 323, phenylalanine 334–phenylalanine 354, valine 364–alanine 384, leucine 397–tryptophan 417, and leucine 430–tyrosine 450.

This sequence belongs to the monovalent cation:proton antiporter 2 (CPA2) transporter (TC 2.A.37) family. CHX (TC 2.A.37.4) subfamily. Preferentially expressed in pollen before and after germination. Detected in pollen grains within anthers of the flower buds or in pollen on fully open flowers and on the stigma, and in pollen tubes growing in the style. Weakly expressed in roots.

The protein resides in the cell membrane. In terms of biological role, high-affinity potassium transporter that plays a role in K(+) acquisition. May operate as a K(+)/H(+) symporter. This is Cation/H(+) symporter 13 (CHX13) from Arabidopsis thaliana (Mouse-ear cress).